The following is a 233-amino-acid chain: Small ribosomal subunit protein uS2 (233 aa).

This sequence belongs to the universal ribosomal protein uS2 family.

This is Small ribosomal subunit protein uS2 from Clostridium novyi (strain NT).